The following is a 612-amino-acid chain: Elongation factor 4 (612 aa).

Positions 12–194 constitute a tr-type G domain; sequence SRIRNFSIIA…QIVEKVPAPT (183 aa). Residues 24–29 and 141–144 each bind GTP; these read DHGKST and NKID.

This sequence belongs to the TRAFAC class translation factor GTPase superfamily. Classic translation factor GTPase family. LepA subfamily.

The protein localises to the cell membrane. It carries out the reaction GTP + H2O = GDP + phosphate + H(+). Its function is as follows. Required for accurate and efficient protein synthesis under certain stress conditions. May act as a fidelity factor of the translation reaction, by catalyzing a one-codon backward translocation of tRNAs on improperly translocated ribosomes. Back-translocation proceeds from a post-translocation (POST) complex to a pre-translocation (PRE) complex, thus giving elongation factor G a second chance to translocate the tRNAs correctly. Binds to ribosomes in a GTP-dependent manner. The polypeptide is Elongation factor 4 (Bacillus subtilis (strain 168)).